The chain runs to 685 residues: Dammaradiene synthase (685 aa).

2 PFTB repeats span residues 82-123 (MDKM…RLLN) and 265-308 (IREA…DPVV). The active-site Proton donor is the Asp-400. PFTB repeat units lie at residues 424-465 (ITRC…KAMV) and 621-672 (IGHG…ARYR).

Belongs to the terpene cyclase/mutase family.

The enzyme catalyses squalene = dammara-20,24-diene. Its function is as follows. Squalene cyclase producing the tetracyclic triterpene dammaradiene. The protein is Dammaradiene synthase (DCD) of Dryopteris crassirhizoma (Thick stemmed wood fern).